Here is a 461-residue protein sequence, read N- to C-terminus: uncharacterized protein (461 aa).

Disordered regions lie at residues 254-273 (NNNN…NNNN) and 368-414 (QPSQ…NNNS). Residues 381–413 (NNNNNNNNNNNNNNNNNNNNNNNNNNNNNNNNN) show a composition bias toward low complexity.

This is an uncharacterized protein from Dictyostelium discoideum (Social amoeba).